A 697-amino-acid polypeptide reads, in one-letter code: DNA ligase (697 aa).

NAD(+) contacts are provided by residues 44-48, 93-94, and Glu-123; these read DGEFD and SL. Lys-125 acts as the N6-AMP-lysine intermediate in catalysis. The NAD(+) site is built by Arg-146, Glu-186, Lys-302, and Lys-326. Positions 420, 423, 439, and 445 each coordinate Zn(2+). A BRCT domain is found at 609–697; sequence SIPRNLEGLS…GPDAVTDSGV (89 aa).

The protein belongs to the NAD-dependent DNA ligase family. LigA subfamily. It depends on Mg(2+) as a cofactor. Mn(2+) serves as cofactor.

The enzyme catalyses NAD(+) + (deoxyribonucleotide)n-3'-hydroxyl + 5'-phospho-(deoxyribonucleotide)m = (deoxyribonucleotide)n+m + AMP + beta-nicotinamide D-nucleotide.. Its function is as follows. DNA ligase that catalyzes the formation of phosphodiester linkages between 5'-phosphoryl and 3'-hydroxyl groups in double-stranded DNA using NAD as a coenzyme and as the energy source for the reaction. It is essential for DNA replication and repair of damaged DNA. The polypeptide is DNA ligase (Rhodococcus opacus (strain B4)).